The primary structure comprises 240 residues: Ribosomal RNA small subunit methyltransferase G (240 aa).

S-adenosyl-L-methionine-binding positions include Gly-79, Phe-84, 130 to 131, and Arg-149; that span reads AE.

Belongs to the methyltransferase superfamily. RNA methyltransferase RsmG family.

It is found in the cytoplasm. Its function is as follows. Specifically methylates the N7 position of a guanine in 16S rRNA. This is Ribosomal RNA small subunit methyltransferase G from Lactobacillus helveticus (strain DPC 4571).